The sequence spans 206 residues: Ribosomal RNA small subunit methyltransferase G (206 aa).

S-adenosyl-L-methionine contacts are provided by residues Gly71, Phe76, Ile125–Glu126, and Arg139.

It belongs to the methyltransferase superfamily. RNA methyltransferase RsmG family.

The protein resides in the cytoplasm. The enzyme catalyses guanosine(527) in 16S rRNA + S-adenosyl-L-methionine = N(7)-methylguanosine(527) in 16S rRNA + S-adenosyl-L-homocysteine. Its function is as follows. Specifically methylates the N7 position of guanine in position 527 of 16S rRNA. The polypeptide is Ribosomal RNA small subunit methyltransferase G (Cereibacter sphaeroides (strain ATCC 17029 / ATH 2.4.9) (Rhodobacter sphaeroides)).